Here is a 406-residue protein sequence, read N- to C-terminus: Protein PHYTOCHROME KINASE SUBSTRATE 4 (406 aa).

The segment covering 106–119 (SWNSQTGLLSNKNR) has biased composition (polar residues). Residues 106-133 (SWNSQTGLLSNKNRQGSDRDGRRSSKKG) form a disordered region.

Belongs to the PKS family. In terms of assembly, interacts in vitro with PHYA and PHYB. In terms of tissue distribution, expressed in the hypocotyl elongation zone. Not found in the root elongation zone.

Modulates phytochrome-mediated control of hypocotyl growth orientation. Involved in PHYA and PHYB signaling. Acts as an inhibitor of asymmetric growth. Not involved in the control of leaf flattening. The polypeptide is Protein PHYTOCHROME KINASE SUBSTRATE 4 (PKS4) (Arabidopsis thaliana (Mouse-ear cress)).